Here is a 431-residue protein sequence, read N- to C-terminus: NADH-quinone oxidoreductase chain 1 (431 aa).

54–63 lines the NAD(+) pocket; that stretch reads GRGGAGFPTG. 167 to 214 contributes to the FMN binding site; that stretch reads GAGAYICGEETALLESLEGKKGMPRMKPPFPAGAGLYGCPTTVNNVES. [4Fe-4S] cluster is bound by residues C346, C349, C352, and C392.

This sequence belongs to the complex I 51 kDa subunit family. In terms of assembly, NDH-1 is composed of at least 14 different subunits, Nqo1 to Nqo14. The complex has a L-shaped structure, with the hydrophobic arm (subunits Nqo7, Nqo8, Nqo10 to Nqo14) embedded in the inner membrane and the hydrophilic peripheral arm (subunits Nqo1 to Nqo6, Nqo9) protruding into the bacterial cytoplasm. The hydrophilic domain contains all the redox centers. FMN serves as cofactor. The cofactor is [4Fe-4S] cluster.

It is found in the cell inner membrane. The catalysed reaction is a quinone + NADH + 5 H(+)(in) = a quinol + NAD(+) + 4 H(+)(out). In terms of biological role, NDH-1 shuttles electrons from NADH, via FMN and iron-sulfur (Fe-S) centers, to quinones in the respiratory chain. The immediate electron acceptor for the enzyme in this species is believed to be ubiquinone. Couples the redox reaction to proton translocation (for every two electrons transferred, four hydrogen ions are translocated across the cytoplasmic membrane), and thus conserves the redox energy in a proton gradient. The sequence is that of NADH-quinone oxidoreductase chain 1 (nqo1) from Paracoccus denitrificans.